The primary structure comprises 245 residues: MTSSSSFSRFDGRAQDQMRAVKITRGFTSNPAGSVLVEFGNTRVMCTASVELGVPRFKRDSGEGWLTAEYAMLPAATAERNRRESMAGKVKGRTHEISRLIGRSLRAAVDLSQLGENTIAIDCDVLQADGGTRTASITGAYVALADAIKVLQERGVVPGSPLLAPVAAVSVGLVDGNVCLDLPYEEDSRADVDLNVVMTEHGEFVEIQGTGEETTFTRAQLNDMLDYAEKGCRELVAAQKAALGI.

Residues Arg93 and 131–133 (GTR) each bind phosphate.

Belongs to the RNase PH family. As to quaternary structure, homohexameric ring arranged as a trimer of dimers.

The catalysed reaction is tRNA(n+1) + phosphate = tRNA(n) + a ribonucleoside 5'-diphosphate. Its function is as follows. Phosphorolytic 3'-5' exoribonuclease that plays an important role in tRNA 3'-end maturation. Removes nucleotide residues following the 3'-CCA terminus of tRNAs; can also add nucleotides to the ends of RNA molecules by using nucleoside diphosphates as substrates, but this may not be physiologically important. Probably plays a role in initiation of 16S rRNA degradation (leading to ribosome degradation) during starvation. This chain is Ribonuclease PH, found in Corynebacterium glutamicum (strain R).